Reading from the N-terminus, the 300-residue chain is Glutamyl-Q tRNA(Asp) synthetase (300 aa).

L-glutamate is bound by residues 8 to 12 (RFAPT) and Asp-44. A 'HIGH' region motif is present at residues 11 to 21 (PTPSGDLHLGS). Zn(2+) is bound by residues Cys-100, Cys-102, Tyr-122, and Cys-126. Positions 181 and 199 each coordinate L-glutamate. Positions 237–241 (KLSKQ) match the 'KMSKS' region motif. ATP is bound at residue Lys-240.

This sequence belongs to the class-I aminoacyl-tRNA synthetase family. GluQ subfamily. It depends on Zn(2+) as a cofactor.

Functionally, catalyzes the tRNA-independent activation of glutamate in presence of ATP and the subsequent transfer of glutamate onto a tRNA(Asp). Glutamate is transferred on the 2-amino-5-(4,5-dihydroxy-2-cyclopenten-1-yl) moiety of the queuosine in the wobble position of the QUC anticodon. The protein is Glutamyl-Q tRNA(Asp) synthetase of Synechococcus sp. (strain ATCC 27144 / PCC 6301 / SAUG 1402/1) (Anacystis nidulans).